The following is a 92-amino-acid chain: Ictacalcin (92 aa).

2 EF-hand domains span residues 12–47 and 49–84; these read ISTFHKYSGKEGDKCTLTKGELKDLLTKELGGAFGN and SDQATLDKIFKDLDTNADGVVDFQEYATMVACTTML. Ca(2+) contacts are provided by Thr-27, Glu-32, Asp-62, Asn-64, Asp-66, and Glu-73.

The protein belongs to the S-100 family. As to expression, abundant in epithelial cells of olfactory rosette, barbel, skin and gill but not brain or muscle.

Its function is as follows. Plays an important role in catfish calcium homeostasis. The polypeptide is Ictacalcin (Ictalurus punctatus (Channel catfish)).